The sequence spans 1163 residues: E3 ubiquitin-protein ligase TRIM33 (1163 aa).

Positions M1–P119 are disordered. Basic and acidic residues predominate over residues T27 to S38. Low complexity predominate over residues T45–S54. Pro residues predominate over residues D72–T87. The segment covering P88–A99 has biased composition (low complexity). The RING-type zinc-finger motif lies at C129–H188. The segment at N215–E268 adopts a B box-type 1; atypical zinc-finger fold. 8 residues coordinate Zn(2+): C220, C223, C244, H257, C280, H283, C303, and H308. The B box-type 2 zinc finger occupies Q275–L316. Residues A345–A369 are a coiled coil. Residues M524 to H533 are compositionally biased toward low complexity. Disordered regions lie at residues M524–Q555, Q575–Q599, L656–P706, T753–I848, and N867–D918. Residues Q534–Q548 are compositionally biased toward basic residues. The segment covering M580–P590 has biased composition (polar residues). 2 stretches are compositionally biased toward low complexity: residues S678–A691 and T753–T797. The span at K821–R830 shows a compositional bias: basic and acidic residues. Residues S870 to L889 are compositionally biased toward polar residues. Residues E921 to L968 form a PHD-type zinc finger. The 124-residue stretch at A991–I1114 folds into the Bromo domain. The interval T1128–P1147 is disordered. Positions E1133–I1144 are enriched in acidic residues.

The protein resides in the nucleus. It catalyses the reaction S-ubiquitinyl-[E2 ubiquitin-conjugating enzyme]-L-cysteine + [acceptor protein]-L-lysine = [E2 ubiquitin-conjugating enzyme]-L-cysteine + N(6)-ubiquitinyl-[acceptor protein]-L-lysine.. The protein operates within protein modification; protein ubiquitination. May act as an E3 ubiquitin-protein ligase and a transcriptional repressor. Involved in the regulation of embryonic and adult hematopoiesis. Required for normal development and survival of both committed erythroid progenitor cells and posterior mesenchymal cells. This chain is E3 ubiquitin-protein ligase TRIM33 (trim33), found in Danio rerio (Zebrafish).